The sequence spans 449 residues: GTPase Der (449 aa).

EngA-type G domains lie at 3–167 and 175–350; these read SIVA…PDEP and TNIA…EQYS. GTP contacts are provided by residues 9 to 16, 56 to 60, 119 to 122, 181 to 188, 228 to 232, and 293 to 296; these read GRPNVGKS, DTGGF, NKVD, DTAGI, and NKWD. One can recognise a KH-like domain in the interval 351–435; it reads RRVTTSELNR…PFRLLFRGRE (85 aa).

It belongs to the TRAFAC class TrmE-Era-EngA-EngB-Septin-like GTPase superfamily. EngA (Der) GTPase family. Associates with the 50S ribosomal subunit.

GTPase that plays an essential role in the late steps of ribosome biogenesis. In Trichlorobacter lovleyi (strain ATCC BAA-1151 / DSM 17278 / SZ) (Geobacter lovleyi), this protein is GTPase Der.